We begin with the raw amino-acid sequence, 145 residues long: D-aminoacyl-tRNA deacylase (145 aa).

The Gly-cisPro motif, important for rejection of L-amino acids motif lies at glycine 137–proline 138.

Belongs to the DTD family. As to quaternary structure, homodimer.

Its subcellular location is the cytoplasm. It catalyses the reaction glycyl-tRNA(Ala) + H2O = tRNA(Ala) + glycine + H(+). It carries out the reaction a D-aminoacyl-tRNA + H2O = a tRNA + a D-alpha-amino acid + H(+). Its function is as follows. An aminoacyl-tRNA editing enzyme that deacylates mischarged D-aminoacyl-tRNAs. Also deacylates mischarged glycyl-tRNA(Ala), protecting cells against glycine mischarging by AlaRS. Acts via tRNA-based rather than protein-based catalysis; rejects L-amino acids rather than detecting D-amino acids in the active site. By recycling D-aminoacyl-tRNA to D-amino acids and free tRNA molecules, this enzyme counteracts the toxicity associated with the formation of D-aminoacyl-tRNA entities in vivo and helps enforce protein L-homochirality. This Limosilactobacillus fermentum (strain NBRC 3956 / LMG 18251) (Lactobacillus fermentum) protein is D-aminoacyl-tRNA deacylase.